A 146-amino-acid polypeptide reads, in one-letter code: Large-conductance mechanosensitive channel (146 aa).

2 helical membrane-spanning segments follow: residues 15-35 (VSLA…TSLV) and 81-101 (GIFI…FIII).

Belongs to the MscL family. Homopentamer.

It is found in the cell membrane. Channel that opens in response to stretch forces in the membrane lipid bilayer. May participate in the regulation of osmotic pressure changes within the cell. The sequence is that of Large-conductance mechanosensitive channel from Clostridium beijerinckii (strain ATCC 51743 / NCIMB 8052) (Clostridium acetobutylicum).